Consider the following 564-residue polypeptide: Apyrase (564 aa).

The N-terminal stretch at 1–25 (MAGKPGIQLFVIFLLLSSFAAVVWA) is a signal peptide. Residues D48, H50, D99, N131, H234, and H258 each contribute to the a divalent metal cation site. AMP is bound at residue R371. N-linked (GlcNAc...) asparagine glycosylation is present at N391. R406, F425, and D515 together coordinate AMP.

This sequence belongs to the 5'-nucleotidase family. A divalent metal cation is required as a cofactor. Female salivary gland (at protein level). Low-level expression in male tissues. Not detected in female carcasses without salivary glands.

The protein resides in the secreted. The enzyme catalyses a ribonucleoside 5'-triphosphate + 2 H2O = a ribonucleoside 5'-phosphate + 2 phosphate + 2 H(+). Functionally, facilitates hematophagy by inhibiting ADP-dependent platelet aggregation in the host. Cleaves adenosine triphosphate (ATP) and adenosine diphosphate (ADP) to adenosine monophosphate (AMP) and inorganic phosphate. May reduce probing time by facilitating the speed of locating blood. This chain is Apyrase, found in Aedes albopictus (Asian tiger mosquito).